A 312-amino-acid chain; its full sequence is Metaxin-1 homolog (312 aa).

The helical transmembrane segment at 282–302 (ILFTIGALVLSVAFAIHTGLI) threads the bilayer.

It belongs to the metaxin family. In terms of assembly, associates with the mitochondrial contact site and cristae organizing system (MICOS) complex (also known as MINOS or MitOS complex).

It localises to the mitochondrion outer membrane. Involved in transport of proteins into the mitochondrion. Essential for embryonic development. In Caenorhabditis briggsae, this protein is Metaxin-1 homolog.